Consider the following 504-residue polypeptide: Pyruvate kinase (504 aa).

Arg53 contributes to the substrate binding site. K(+) contacts are provided by Asn55, Ser57, Asp88, and Thr89. 55–58 (NFSH) contributes to the ATP binding site. Residues Arg95 and Lys181 each contribute to the ATP site. Residue Glu246 participates in Mg(2+) binding. Substrate-binding residues include Gly269, Asp270, and Thr302. Asp270 contacts Mg(2+).

Belongs to the pyruvate kinase family. As to quaternary structure, homotetramer. The cofactor is Mg(2+). K(+) is required as a cofactor.

The protein resides in the cytoplasm. It carries out the reaction pyruvate + ATP = phosphoenolpyruvate + ADP + H(+). It functions in the pathway carbohydrate degradation; glycolysis; pyruvate from D-glyceraldehyde 3-phosphate: step 5/5. The polypeptide is Pyruvate kinase (CDC19) (Candida albicans (strain SC5314 / ATCC MYA-2876) (Yeast)).